The primary structure comprises 216 residues: Transmembrane emp24 domain-containing protein eca (216 aa).

An N-terminal signal peptide occupies residues 1 to 20 (MRDQWICLALVLCALHSACG). The Lumenal segment spans residues 21-183 (LYFHISETER…RHTSESTNSR (163 aa)). Residues 30-126 (RKCFIEEVPD…QLRVHLDIQV (97 aa)) form the GOLD domain. Residues 134 to 164 (ANVAQKEKLTELQLRIRQLLDQVEQITKEQN) adopt a coiled-coil conformation. The helical transmembrane segment at 184–203 (VLWWSLAQTVVLVCMGFWQM) threads the bilayer. At 204–216 (RHLKSFFEAKKLV) the chain is on the cytoplasmic side. Positions 213-216 (KKLV) match the Prevents secretion from ER motif.

This sequence belongs to the EMP24/GP25L family.

Its subcellular location is the endoplasmic reticulum membrane. Functionally, eca and bai are essential, though not redundant, for dorsoventral patterning of the embryo. Specifically required during early embryogenesis for the activity of maternal tkv, while the zygotic tkv is not affected. The protein is Transmembrane emp24 domain-containing protein eca of Drosophila mojavensis (Fruit fly).